Consider the following 94-residue polypeptide: Small ribosomal subunit protein bS6 (94 aa).

This sequence belongs to the bacterial ribosomal protein bS6 family.

Its function is as follows. Binds together with bS18 to 16S ribosomal RNA. The polypeptide is Small ribosomal subunit protein bS6 (Akkermansia muciniphila (strain ATCC BAA-835 / DSM 22959 / JCM 33894 / BCRC 81048 / CCUG 64013 / CIP 107961 / Muc)).